The following is a 259-amino-acid chain: Dysbindin domain-containing protein 2 (259 aa).

Disordered regions lie at residues 27-56 (SCER…PVSR) and 174-259 (ADVF…GACS). Over residues 32-46 (SPPPPLPHFRLPPLP) the composition is skewed to pro residues. Residues 205–223 (TSDRTTSRTSSSSSSDSST) show a composition bias toward low complexity. Residues serine 217 and serine 218 each carry the phosphoserine modification. Threonine 237 bears the Phosphothreonine mark. Serine 242 bears the Phosphoserine mark.

The protein belongs to the dysbindin family. In terms of assembly, monomer. Interacts with CSNK1D and CSNK1E. Detected in brain.

Its function is as follows. May modulate the activity of casein kinase-1. Inhibits CSNK1D autophosphorylation (in vitro). This chain is Dysbindin domain-containing protein 2 (DBNDD2), found in Homo sapiens (Human).